Reading from the N-terminus, the 162-residue chain is Cytochrome B pre-mRNA-processing protein 6 (162 aa).

At Ser-2 the chain carries N-acetylserine. Position 97 is a phosphothreonine (Thr-97).

It is found in the mitochondrion. In terms of biological role, this protein is involved in processing of the 5' terminus and the intervening sequences of cytochrome b pre-mRNA. This is Cytochrome B pre-mRNA-processing protein 6 (CBP6) from Saccharomyces cerevisiae (strain ATCC 204508 / S288c) (Baker's yeast).